The sequence spans 454 residues: MTSNGTNGSATAYHASSTQEAIQAENDFAAHNYHPLPVVFARAQGTSVWDPEGRHYLDFLSAYSAVNQGHCHPKLVAALVDQASRLTLSSRAFYNDVFPKFAEMVTKYFGFDMVLPMNTGAEAVETGIKIARKWGYKVKGIPENEAIILSAENNFHGRTMAAISLSSDPESRENYGPYVPNIGCTIPGTEKPITYNDKAALREAFEKAGSNLAAFLVEPIQGEAGIIVPDDDYLQLARSLCDQHNVLLICDEIQTGIARTGKLLCHEWSGIKPDMVLLGKAISGGMYPVSCVLGRKDVMLTVEPGTHGSTYGGNPLACAVAIRALEVVQEENMVERAEKLGQAFRSGLEAIQNPIIQTVRGKGLLNAIVIDESKTNGHTAWDLCMLMKEKGLLAKPTHQNIIRLAPPLVITEEEIAKALEIIKAAVAELPNLKGAAEDKVVPPPEKKVKITLEN.

N6-(pyridoxal phosphate)lysine is present on Lys-280.

The protein belongs to the class-III pyridoxal-phosphate-dependent aminotransferase family. Pyridoxal 5'-phosphate is required as a cofactor.

It localises to the cytoplasm. The catalysed reaction is a 2-oxocarboxylate + L-ornithine = L-glutamate 5-semialdehyde + an L-alpha-amino acid. Its pathway is amino-acid biosynthesis; L-proline biosynthesis; L-glutamate 5-semialdehyde from L-ornithine: step 1/1. The protein is Ornithine aminotransferase (otaA) of Emericella nidulans (strain FGSC A4 / ATCC 38163 / CBS 112.46 / NRRL 194 / M139) (Aspergillus nidulans).